Reading from the N-terminus, the 523-residue chain is Solute carrier family 2, facilitated glucose transporter member 2 (523 aa).

The Cytoplasmic portion of the chain corresponds to 1–10 (MSEDKITGTL). A helical membrane pass occupies residues 11–31 (AFTVFTAVLSSFQFGYDIGVI). The Extracellular portion of the chain corresponds to 32–97 (NAPQEVIISH…SAHIVTMLWS (66 aa)). The N-linked (GlcNAc...) asparagine glycan is linked to Asn-62. The chain crosses the membrane as a helical span at residues 98–118 (LSVSSFAVGGMVASFFGGWLG). Over 119–126 (DKLGRIKA) the chain is Cytoplasmic. The chain crosses the membrane as a helical span at residues 127–147 (MLAANSLSLTGALLMGCSKFG). The Extracellular segment spans residues 148-157 (PAHALIIAGR). The helical transmembrane segment at 158 to 178 (SVSGLYCGLISGLVPMYIGEI) threads the bilayer. Topologically, residues 179–186 (APTTLRGA) are cytoplasmic. Residues 187 to 207 (LGTLHQLALVTGILISQIAGL) traverse the membrane as a helical segment. Gln-192 contributes to the D-glucose binding site. The Extracellular segment spans residues 208–216 (SFILGNQDH). The chain crosses the membrane as a helical span at residues 217 to 237 (WHILLGLSAVPALLQCLLLLF). The Cytoplasmic portion of the chain corresponds to 238 to 302 (CPESPRYLYI…LFTDANYRQP (65 aa)). The chain crosses the membrane as a helical span at residues 303-323 (ILVALMLHMAQQFSGINGIFY). Residues 313–314 (QQ) and Asn-319 each bind D-glucose. Over 324–337 (YSTSIFQTAGISQP) the chain is Extracellular. Residues 338-358 (VYATIGVGAINMIFTAVSVLL) traverse the membrane as a helical segment. Asn-348 contributes to the D-glucose binding site. At 359–367 (VEKAGRRTL) the chain is on the cytoplasmic side. The helical transmembrane segment at 368-388 (FLTGMIGMFFCTIFMSVGLVL) threads the bilayer. The Extracellular portion of the chain corresponds to 389–401 (LDKFAWMSYVSMT). The chain crosses the membrane as a helical span at residues 402 to 422 (AIFLFVSFFEIGPGPIPWFMV). Glu-411 and Trp-419 together coordinate D-glucose. Residues 423–432 (AEFFSQGPRP) are Cytoplasmic-facing. A helical transmembrane segment spans residues 433–453 (TALALAAFSNWVCNFVIALCF). Topologically, residues 454–460 (QYIADFL) are extracellular. A helical membrane pass occupies residues 461–481 (GPYVFFLFAGVVLVFTLFTFF). The Cytoplasmic portion of the chain corresponds to 482–523 (KVPETKGKSFEEIAAEFRKKSGSAPPRKAAVQMEFLASSESV). Ser-522 is subject to Phosphoserine.

Belongs to the major facilitator superfamily. Sugar transporter (TC 2.A.1.1) family. Glucose transporter subfamily. Post-translationally, N-glycosylated; required for stability and retention at the cell surface of pancreatic beta cells. In terms of tissue distribution, in embryo, expressed in endoderm layer of yolk sac and liver primordium.

The protein resides in the cell membrane. It carries out the reaction D-glucose(out) = D-glucose(in). The enzyme catalyses D-fructose(out) = D-fructose(in). It catalyses the reaction L-dehydroascorbate(out) = L-dehydroascorbate(in). The catalysed reaction is D-galactose(in) = D-galactose(out). D-glucose and maltose competitively inhibit fructose transport. D-glucose, D-fructose and maltose inhibit deoxyglucose transport. Facilitative hexose transporter that mediates the transport of glucose, fructose and galactose. Likely mediates the bidirectional transfer of glucose across the plasma membrane of hepatocytes and is responsible for uptake of glucose by the beta cells; may comprise part of the glucose-sensing mechanism of the beta cell. May also participate with the Na(+)/glucose cotransporter in the transcellular transport of glucose in the small intestine and kidney. Also able to mediate the transport of dehydroascorbate. The sequence is that of Solute carrier family 2, facilitated glucose transporter member 2 from Mus musculus (Mouse).